Reading from the N-terminus, the 309-residue chain is Aspartate carbamoyltransferase catalytic subunit (309 aa).

Arg55 and Thr56 together coordinate carbamoyl phosphate. An L-aspartate-binding site is contributed by Lys85. 3 residues coordinate carbamoyl phosphate: Arg106, His135, and Gln138. Arg168 and Arg230 together coordinate L-aspartate. Carbamoyl phosphate-binding residues include Leu268 and Pro269.

This sequence belongs to the aspartate/ornithine carbamoyltransferase superfamily. ATCase family. As to quaternary structure, heterododecamer (2C3:3R2) of six catalytic PyrB chains organized as two trimers (C3), and six regulatory PyrI chains organized as three dimers (R2).

It catalyses the reaction carbamoyl phosphate + L-aspartate = N-carbamoyl-L-aspartate + phosphate + H(+). It participates in pyrimidine metabolism; UMP biosynthesis via de novo pathway; (S)-dihydroorotate from bicarbonate: step 2/3. Catalyzes the condensation of carbamoyl phosphate and aspartate to form carbamoyl aspartate and inorganic phosphate, the committed step in the de novo pyrimidine nucleotide biosynthesis pathway. This chain is Aspartate carbamoyltransferase catalytic subunit, found in Aliivibrio fischeri (strain MJ11) (Vibrio fischeri).